The sequence spans 433 residues: Glutamate-1-semialdehyde 2,1-aminomutase (433 aa).

The residue at position 271 (K271) is an N6-(pyridoxal phosphate)lysine.

The protein belongs to the class-III pyridoxal-phosphate-dependent aminotransferase family. HemL subfamily. Homodimer. Requires pyridoxal 5'-phosphate as cofactor.

The protein localises to the cytoplasm. It carries out the reaction (S)-4-amino-5-oxopentanoate = 5-aminolevulinate. The protein operates within porphyrin-containing compound metabolism; protoporphyrin-IX biosynthesis; 5-aminolevulinate from L-glutamyl-tRNA(Glu): step 2/2. Its pathway is porphyrin-containing compound metabolism; chlorophyll biosynthesis. In Prochlorococcus marinus (strain AS9601), this protein is Glutamate-1-semialdehyde 2,1-aminomutase.